Here is a 239-residue protein sequence, read N- to C-terminus: Small ribosomal subunit protein uS3 (239 aa).

Positions 39–107 (IREFIKEECK…ELHLNIVEVR (69 aa)) constitute a KH type-2 domain. Positions 212-221 (PQARDRKAQE) are enriched in basic and acidic residues. The interval 212-239 (PQARDRKAQELQDGPAPRGAGGNRRGDR) is disordered. Over residues 230–239 (GAGGNRRGDR) the composition is skewed to gly residues.

The protein belongs to the universal ribosomal protein uS3 family. Part of the 30S ribosomal subunit. Forms a tight complex with proteins S10 and S14.

Binds the lower part of the 30S subunit head. Binds mRNA in the 70S ribosome, positioning it for translation. This Ruegeria sp. (strain TM1040) (Silicibacter sp.) protein is Small ribosomal subunit protein uS3.